A 906-amino-acid polypeptide reads, in one-letter code: Eukaryotic translation initiation factor 4 gamma 2 (906 aa).

N-acetylmethionine is present on Met-1. Positions 1 to 71 (MESAIAEGGA…SAANNSANEK (71 aa)) are disordered. A Phosphoserine modification is found at Ser-11. An MIF4G domain is found at 78–308 (FRKVRGILNK…QDTVELREHH (231 aa)). Residue Thr-89 is modified to Phosphothreonine. Position 359 is an omega-N-methylarginine (Arg-359). A Phosphoserine modification is found at Ser-394. N6-methyllysine is present on Lys-430. Ser-442 carries the phosphoserine modification. Residues 497–540 (PPSAQPPRTQTPPLGQTPQLGLKTNPPLIQEKPAKTSKKPPPSK) are disordered. A compositionally biased stretch (polar residues) spans 502–515 (PPRTQTPPLGQTPQ). At Arg-504 the chain carries Omega-N-methylarginine. Phosphothreonine is present on residues Thr-507 and Thr-513. The MI domain maps to 542 to 665 (ELLKLTEAVV…SISELAQPLE (124 aa)). Lys-574 is covalently cross-linked (Glycyl lysine isopeptide (Lys-Gly) (interchain with G-Cter in SUMO2)). Residues 719–903 (EGKGLSFLFP…ETAEEEESEE (185 aa)) form the W2 domain. Phosphoserine is present on Ser-901.

It belongs to the eukaryotic initiation factor 4G family. Interacts with the serine/threonine protein kinases MKNK1 and MKNK2. Binds EIF4A and EIF3. Interacts with MIF4GD. Interacts with DAZAP2. In terms of processing, phosphorylation; hyperphosphorylated during mitosis. In terms of tissue distribution, ubiquitously expressed in all tissues examined.

In terms of biological role, appears to play a role in the switch from cap-dependent to IRES-mediated translation during mitosis, apoptosis and viral infection. Cleaved by some caspases and viral proteases. This chain is Eukaryotic translation initiation factor 4 gamma 2, found in Mus musculus (Mouse).